The sequence spans 333 residues: Adenosine deaminase (333 aa).

Zn(2+) is bound by residues H12 and H14. Residues H14, D16, and G170 each contribute to the substrate site. H197 is a Zn(2+) binding site. Catalysis depends on E200, which acts as the Proton donor. Residue D278 coordinates Zn(2+). D279 contributes to the substrate binding site.

This sequence belongs to the metallo-dependent hydrolases superfamily. Adenosine and AMP deaminases family. Adenosine deaminase subfamily. Zn(2+) serves as cofactor.

The enzyme catalyses adenosine + H2O + H(+) = inosine + NH4(+). It catalyses the reaction 2'-deoxyadenosine + H2O + H(+) = 2'-deoxyinosine + NH4(+). Catalyzes the hydrolytic deamination of adenosine and 2-deoxyadenosine. The protein is Adenosine deaminase of Shigella flexneri serotype 5b (strain 8401).